The following is a 574-amino-acid chain: Proline--tRNA ligase (574 aa).

Belongs to the class-II aminoacyl-tRNA synthetase family. ProS type 1 subfamily. Homodimer.

Its subcellular location is the cytoplasm. The enzyme catalyses tRNA(Pro) + L-proline + ATP = L-prolyl-tRNA(Pro) + AMP + diphosphate. Functionally, catalyzes the attachment of proline to tRNA(Pro) in a two-step reaction: proline is first activated by ATP to form Pro-AMP and then transferred to the acceptor end of tRNA(Pro). As ProRS can inadvertently accommodate and process non-cognate amino acids such as alanine and cysteine, to avoid such errors it has two additional distinct editing activities against alanine. One activity is designated as 'pretransfer' editing and involves the tRNA(Pro)-independent hydrolysis of activated Ala-AMP. The other activity is designated 'posttransfer' editing and involves deacylation of mischarged Ala-tRNA(Pro). The misacylated Cys-tRNA(Pro) is not edited by ProRS. This Nitrosococcus oceani (strain ATCC 19707 / BCRC 17464 / JCM 30415 / NCIMB 11848 / C-107) protein is Proline--tRNA ligase.